A 202-amino-acid polypeptide reads, in one-letter code: Snake venom metalloproteinase leucurolysin-A (202 aa).

Gln1 bears the Pyrrolidone carboxylic acid mark. Residues 6 to 202 (RYIELVVVAD…HNPQCILNKP (197 aa)) enclose the Peptidase M12B domain. Ca(2+)-binding residues include Glu9 and Asp93. 3 disulfides stabilise this stretch: Cys117-Cys197, Cys157-Cys181, and Cys159-Cys164. A Zn(2+)-binding site is contributed by His142. Glu143 is an active-site residue. Zn(2+) is bound by residues His146 and His152. Residues Cys197 and Asn200 each contribute to the Ca(2+) site.

It belongs to the venom metalloproteinase (M12B) family. P-I subfamily. In terms of assembly, monomer. Zn(2+) serves as cofactor. Expressed by the venom gland.

The protein localises to the secreted. Its activity is regulated as follows. Inhibited by EDTA and 2-mercaptoethanol. Inhibited by 1 mM zinc ion and to a lesser extent by 1 mM calcium ion. Its function is as follows. Non-hemorrhagic metalloproteinase that hydrolyzes the alpha chains of fibrinogen, as well as fibrin, fibronectin and casein. Beta and gamma chains are also hydrolyzed, but more slowly. Thrombolytic activity is also observed. Induces detachment of endothelial cells followed by death, and inhibits endothelial cell adhesion to fibronectin. Induces edema in mouse paw. Inhibits ADP-induced platelet aggregation on human platelet-rich plasma with an IC(50) of 2.8 uM. The protein is Snake venom metalloproteinase leucurolysin-A of Bothrops leucurus (Whitetail lancehead).